The following is a 187-amino-acid chain: ATP synthase subunit b 2 (187 aa).

A helical membrane pass occupies residues 32-52 (TTFAAQILWLAIAFGLLYYLM).

It belongs to the ATPase B chain family. In terms of assembly, F-type ATPases have 2 components, F(1) - the catalytic core - and F(0) - the membrane proton channel. F(1) has five subunits: alpha(3), beta(3), gamma(1), delta(1), epsilon(1). F(0) has three main subunits: a(1), b(2) and c(10-14). The alpha and beta chains form an alternating ring which encloses part of the gamma chain. F(1) is attached to F(0) by a central stalk formed by the gamma and epsilon chains, while a peripheral stalk is formed by the delta and b chains.

The protein resides in the cell inner membrane. Functionally, f(1)F(0) ATP synthase produces ATP from ADP in the presence of a proton or sodium gradient. F-type ATPases consist of two structural domains, F(1) containing the extramembraneous catalytic core and F(0) containing the membrane proton channel, linked together by a central stalk and a peripheral stalk. During catalysis, ATP synthesis in the catalytic domain of F(1) is coupled via a rotary mechanism of the central stalk subunits to proton translocation. Component of the F(0) channel, it forms part of the peripheral stalk, linking F(1) to F(0). The b'-subunit is a diverged and duplicated form of b found in plants and photosynthetic bacteria. This Methylobacterium sp. (strain 4-46) protein is ATP synthase subunit b 2 (atpF2).